Consider the following 625-residue polypeptide: Probable potassium transport system protein Kup 2 (625 aa).

12 consecutive transmembrane segments (helical) span residues 15-35, 52-72, 98-118, 134-154, 164-184, 212-232, 246-266, 284-304, 336-356, 365-385, 394-414, and 417-437; these read LSFA…LYAF, ILSL…LVIV, GGWL…DGML, LSPN…FFLF, IGVY…ILGF, LALF…ALFA, WFAV…ALVL, FLPV…QAII, VYLP…VVIF, AYGI…GIIA, FKIL…AGNI, and LLTG…VMYT.

Belongs to the HAK/KUP transporter (TC 2.A.72) family.

Its subcellular location is the cell inner membrane. The catalysed reaction is K(+)(in) + H(+)(in) = K(+)(out) + H(+)(out). In terms of biological role, transport of potassium into the cell. Likely operates as a K(+):H(+) symporter. This is Probable potassium transport system protein Kup 2 from Legionella pneumophila (strain Corby).